The primary structure comprises 541 residues: Cilia- and flagella-associated protein 97 (541 aa).

S8 and S19 each carry phosphoserine. Disordered regions lie at residues 28–47, 93–296, 313–337, 406–430, and 495–514; these read ESNS…GINK, ERKA…KQEN, RCVK…VLDA, LSRQ…PPKL, and HYSP…GLSC. 3 stretches are compositionally biased toward basic and acidic residues: residues 35 to 47, 93 to 107, and 142 to 151; these read KQND…GINK, ERKA…HIEN, and RIPKIVKGED. Acidic residues predominate over residues 152 to 161; sequence DYYTDGEESS. At T155 the chain carries Phosphothreonine. Residues S160 and S161 each carry the phosphoserine modification. The segment covering 176–201 has biased composition (low complexity); the sequence is SSNLKKNVSKKYSSSSLSSSSSRSNS. Residues 207–218 are compositionally biased toward basic and acidic residues; the sequence is GSDRQRRSESHS. 2 stretches are compositionally biased toward polar residues: residues 219–232 and 240–250; these read SGKC…SSPK and KSSAQPSSTKQ. Position 230 is a phosphoserine (S230). A Phosphoserine modification is found at S258. Residues 267–277 are compositionally biased toward polar residues; it reads PLSTPDVSPAQ. Residues 287-296 are compositionally biased toward basic and acidic residues; it reads QKVKVKKQEN. Positions 382–459 form a coiled coil; the sequence is RKNYSFTREE…ALLKRLEAVK (78 aa). A compositionally biased stretch (polar residues) spans 503–513; it reads SRTSSATSGLS.

The protein belongs to the CFAP97 family. In terms of tissue distribution, highly expressed in testis with lower levels detected in other tissues including lung, heart and kidney.

In Mus musculus (Mouse), this protein is Cilia- and flagella-associated protein 97.